The sequence spans 165 residues: Phosphopantetheine adenylyltransferase (165 aa).

Substrate is bound at residue S10. Residues 10–11 (SF) and H18 contribute to the ATP site. Substrate is bound by residues K42, T79, and R93. ATP contacts are provided by residues 94–96 (GLR), E104, and 129–135 (VRPITAT).

The protein belongs to the bacterial CoaD family. As to quaternary structure, homohexamer. It depends on Mg(2+) as a cofactor.

The protein localises to the cytoplasm. The enzyme catalyses (R)-4'-phosphopantetheine + ATP + H(+) = 3'-dephospho-CoA + diphosphate. It functions in the pathway cofactor biosynthesis; coenzyme A biosynthesis; CoA from (R)-pantothenate: step 4/5. Reversibly transfers an adenylyl group from ATP to 4'-phosphopantetheine, yielding dephospho-CoA (dPCoA) and pyrophosphate. The polypeptide is Phosphopantetheine adenylyltransferase (Afipia carboxidovorans (strain ATCC 49405 / DSM 1227 / KCTC 32145 / OM5) (Oligotropha carboxidovorans)).